The following is a 420-amino-acid chain: Vasopressin V1a receptor (420 aa).

Positions 1–45 are disordered; it reads MSFPRGSYDPAASNSSPRWPLSAEDANSSREAAGHQKGSDPSGDV. The Extracellular segment spans residues 1 to 54; the sequence is MSFPRGSYDPAASNSSPRWPLSAEDANSSREAAGHQKGSDPSGDVRNEELAKLE. N27 is a glycosylation site (N-linked (GlcNAc...) asparagine). The segment covering 32–45 has biased composition (basic and acidic residues); sequence AAGHQKGSDPSGDV. The chain crosses the membrane as a helical span at residues 55–75; that stretch reads IAVLAVIFVVAVLGNSSVLLA. Residues 76–92 lie on the Cytoplasmic side of the membrane; it reads LHRTPRKTSRMHLFIRH. The chain crosses the membrane as a helical span at residues 93–113; that stretch reads LSLADLAVAFFQVLPQLCWDI. The Extracellular segment spans residues 114 to 125; it reads TYRFRGPDWLCR. C124 and C205 are disulfide-bonded. A helical membrane pass occupies residues 126–146; sequence VVKHLQVFAMFASAYMLVVMT. The Cytoplasmic segment spans residues 147–168; sequence ADRYIAVCHPLKTLQQPARRSR. The chain crosses the membrane as a helical span at residues 169–189; it reads LMIAASWVLSFLLSTPQYFIF. Residues 190 to 225 are Extracellular-facing; that stretch reads SMIEIEVNNGTKTQDCWATFIQPWGTRAYVTWMTSG. N-linked (GlcNAc...) asparagine glycosylation occurs at N198. Residues 226 to 246 form a helical membrane-spanning segment; it reads VFVVPVVILGTCYGFICYHIW. Residues 247 to 294 are Cytoplasmic-facing; it reads RNVRGKTASRQSKGSGEDVAPFHKGLLVTPCVSSVKTISRAKIRTVKM. The helical transmembrane segment at 295–315 threads the bilayer; that stretch reads TFVIVTAYILCWAPFFIVQMW. The Extracellular segment spans residues 316-331; it reads SVWDDNFIWTDSENPS. Residues 332 to 352 traverse the membrane as a helical segment; it reads ITITALLASLNSCCNPWIYMF. Residues 353–420 lie on the Cytoplasmic side of the membrane; the sequence is FSGHLLQDCV…RSIRFIPVST (68 aa). Residues C367 and C368 are each lipidated (S-palmitoyl cysteine). The disordered stretch occupies residues 379 to 411; that stretch reads DSDNMSRRQTSYSNNRSPTNSTGTWKDSPKSSR. Residues 385–403 are compositionally biased toward polar residues; it reads RRQTSYSNNRSPTNSTGTW. S406 is modified (phosphoserine).

Belongs to the G-protein coupled receptor 1 family. Vasopressin/oxytocin receptor subfamily.

It localises to the cell membrane. Its function is as follows. Receptor for arginine vasopressin. The activity of this receptor is mediated by G proteins which activate a phosphatidyl-inositol-calcium second messenger system. Involved in social memory formation. In Microtus montanus (Montane vole), this protein is Vasopressin V1a receptor (Avpr1a).